The chain runs to 244 residues: NH(3)-dependent NAD(+) synthetase (244 aa).

An ATP-binding site is contributed by 29–36; it reads GISGGIDS. Asp35 serves as a coordination point for Mg(2+). Arg113 contributes to the deamido-NAD(+) binding site. Thr133 provides a ligand contact to ATP. A Mg(2+)-binding site is contributed by Glu138. Lys146 and Asp153 together coordinate deamido-NAD(+). ATP is bound by residues Lys162 and Thr184. 230-231 is a binding site for deamido-NAD(+); the sequence is HK.

It belongs to the NAD synthetase family. Homodimer.

It carries out the reaction deamido-NAD(+) + NH4(+) + ATP = AMP + diphosphate + NAD(+) + H(+). It functions in the pathway cofactor biosynthesis; NAD(+) biosynthesis; NAD(+) from deamido-NAD(+) (ammonia route): step 1/1. Catalyzes the ATP-dependent amidation of deamido-NAD to form NAD. Uses ammonia as a nitrogen source. The polypeptide is NH(3)-dependent NAD(+) synthetase (Mesoplasma florum (strain ATCC 33453 / NBRC 100688 / NCTC 11704 / L1) (Acholeplasma florum)).